Here is a 351-residue protein sequence, read N- to C-terminus: Nicotinate-nucleotide--dimethylbenzimidazole phosphoribosyltransferase (351 aa).

The Proton acceptor role is filled by Glu-317.

It belongs to the CobT family.

It catalyses the reaction 5,6-dimethylbenzimidazole + nicotinate beta-D-ribonucleotide = alpha-ribazole 5'-phosphate + nicotinate + H(+). It participates in nucleoside biosynthesis; alpha-ribazole biosynthesis; alpha-ribazole from 5,6-dimethylbenzimidazole: step 1/2. In terms of biological role, catalyzes the synthesis of alpha-ribazole-5'-phosphate from nicotinate mononucleotide (NAMN) and 5,6-dimethylbenzimidazole (DMB). The polypeptide is Nicotinate-nucleotide--dimethylbenzimidazole phosphoribosyltransferase (Pseudomonas fluorescens (strain SBW25)).